The chain runs to 135 residues: Small ribosomal subunit protein eS24A (135 aa).

An N-acetylserine modification is found at Ser2. Ser14 carries the post-translational modification Phosphoserine. Residue Lys21 forms a Glycyl lysine isopeptide (Lys-Gly) (interchain with G-Cter in ubiquitin) linkage. Ser56 is modified (phosphoserine). The tract at residues 102 to 135 is disordered; that stretch reads KASRQQRKQKKNRDKKIFGTGKRLAKKVARRNAD. Composition is skewed to basic residues over residues 105 to 115 and 124 to 135; these read RQQRKQKKNRD and RLAKKVARRNAD.

It belongs to the eukaryotic ribosomal protein eS24 family. Component of the small ribosomal subunit (SSU). Mature yeast ribosomes consist of a small (40S) and a large (60S) subunit. The 40S small subunit contains 1 molecule of ribosomal RNA (18S rRNA) and 33 different proteins (encoded by 57 genes). The large 60S subunit contains 3 rRNA molecules (25S, 5.8S and 5S rRNA) and 46 different proteins (encoded by 81 genes). Post-translationally, N-terminally acetylated by acetyltransferase NatA. Also partially acetylated by NatC.

The protein resides in the cytoplasm. Component of the ribosome, a large ribonucleoprotein complex responsible for the synthesis of proteins in the cell. The small ribosomal subunit (SSU) binds messenger RNAs (mRNAs) and translates the encoded message by selecting cognate aminoacyl-transfer RNA (tRNA) molecules. The large subunit (LSU) contains the ribosomal catalytic site termed the peptidyl transferase center (PTC), which catalyzes the formation of peptide bonds, thereby polymerizing the amino acids delivered by tRNAs into a polypeptide chain. The nascent polypeptides leave the ribosome through a tunnel in the LSU and interact with protein factors that function in enzymatic processing, targeting, and the membrane insertion of nascent chains at the exit of the ribosomal tunnel. This chain is Small ribosomal subunit protein eS24A, found in Saccharomyces cerevisiae (strain ATCC 204508 / S288c) (Baker's yeast).